The chain runs to 41 residues: Large ribosomal subunit protein bL36 (41 aa).

This sequence belongs to the bacterial ribosomal protein bL36 family.

This Xylella fastidiosa (strain M23) protein is Large ribosomal subunit protein bL36.